We begin with the raw amino-acid sequence, 421 residues long: Acyl-coenzyme A thioesterase 5 (421 aa).

Active-site charge relay system residues include Ser-232, Asp-326, and His-360. A Microbody targeting signal motif is present at residues 419–421 (AKL).

Belongs to the C/M/P thioester hydrolase family. As to expression, highly expressed in spleen, brain, testis and proximal and distal intestine; expressed at low level in the liver.

Its subcellular location is the peroxisome. The catalysed reaction is hexadecanoyl-CoA + H2O = hexadecanoate + CoA + H(+). The enzyme catalyses decanoyl-CoA + H2O = decanoate + CoA + H(+). It carries out the reaction octanoyl-CoA + H2O = octanoate + CoA + H(+). It catalyses the reaction dodecanoyl-CoA + H2O = dodecanoate + CoA + H(+). The catalysed reaction is tetradecanoyl-CoA + H2O = tetradecanoate + CoA + H(+). The enzyme catalyses octadecanoyl-CoA + H2O = octadecanoate + CoA + H(+). It carries out the reaction eicosanoyl-CoA + H2O = eicosanoate + CoA + H(+). It catalyses the reaction (9Z)-octadecenoyl-CoA + H2O = (9Z)-octadecenoate + CoA + H(+). The catalysed reaction is (9Z,12Z)-octadecadienoyl-CoA + H2O = (9Z,12Z)-octadecadienoate + CoA + H(+). The enzyme catalyses (5Z,8Z,11Z,14Z)-eicosatetraenoyl-CoA + H2O = (5Z,8Z,11Z,14Z)-eicosatetraenoate + CoA + H(+). It carries out the reaction (9Z)-hexadecenoyl-CoA + H2O = (9Z)-hexadecenoate + CoA + H(+). It participates in lipid metabolism; fatty acid metabolism. Catalyzes the hydrolysis of acyl-CoAs into free fatty acids and coenzyme A (CoASH), regulating their respective intracellular levels. Mainly active on medium-chain acyl-CoAs. Seems to be involved in intraperoxisomal regulation of acyl-CoA levels, but not CoASH levels. May have a function in termination of beta-oxidation of fatty acids. The polypeptide is Acyl-coenzyme A thioesterase 5 (Acot5) (Mus musculus (Mouse)).